A 463-amino-acid polypeptide reads, in one-letter code: Sodium-coupled neutral amino acid transporter 7 (463 aa).

Ser28 carries the phosphoserine modification. Helical transmembrane passes span 56–76 (AVFIVVNACLGAGLLNFPAAF), 82–102 (VAAGIALQMGMLVFIISGLVI), 130–150 (LCEVAIAVYTFGTCIAFLIII), 179–199 (FTISLTAFLFILPLSIPKEIG), 206–226 (FLSVVGTWYVTAIIIIKYIWP), 240–260 (ASWMAVFNAMPTICFGFQCHV), 283–303 (AAMVIALAVYMGTGICGFLTF), 320–340 (VAVAVARAFIILSVLTSYPIL), 372–392 (VLQTLVWFLLTLLLALFIPDI), 396–416 (ISVIGGLAACFIFIFPGLCLI), and 429–449 (ASWWALVSYGVLLVTLGAFIF).

It belongs to the amino acid/polyamine transporter 2 family. Interacts with the mTORC1 complex; this interaction mediates the recruitment of mTORC1 to the lysosome and its subsequent activation. Highly expressed in the brain, including the hippocampus, especially in the granular layer of dentate gyrus cells and the pyramidal cell layer of the hippocampus, amygdala, thalamus, hypothalamus, in the layer of Purkinje cells in the cerebellum and the layers of cortex. Particularly strong expression in neurons of the ventromedial hypothalamus, basolateral amygdala, ventral tegmental area, and locus coeruleus. Not detected in glial cells, including astrocytes. In addition to brain, also expressed in the spinal cord (at protein level).

The protein localises to the lysosome membrane. The protein resides in the cell projection. Its subcellular location is the axon. The enzyme catalyses L-glutamine(in) + Na(+)(in) = L-glutamine(out) + Na(+)(out). It carries out the reaction L-asparagine(in) + Na(+)(in) = L-asparagine(out) + Na(+)(out). Functionally, symporter that selectively cotransports sodium ions and amino acids, such as L-glutamine and L-asparagine from the lysosome into the cytoplasm and may participates in mTORC1 activation. The transport activity requires an acidic lysosomal lumen. This Mus musculus (Mouse) protein is Sodium-coupled neutral amino acid transporter 7.